A 341-amino-acid chain; its full sequence is Paired box protein Pax-9 (341 aa).

The paired DNA-binding region spans 4-130; that stretch reads AFGEVNQLGG…SSISRILRNK (127 aa). Residues 7-63 are PAI subdomain; the sequence is EVNQLGGVFVNGRPLPNAIRLRIVELAQLGIRPCDISRQLRVSHGCVSKILARYNET. The tract at residues 82–130 is RED subdomain; the sequence is TVVKHIRTYKQRDPGIFAWEIRDRLLADGVCDKYNVPSVSSISRILRNK. Residues 168–189 form an interaction with KDM5B region; that stretch reads AAAAKVPTPPGVPAIPGSVAMP.

Interacts with KDM5B.

The protein localises to the nucleus. Transcription factor required for normal development of thymus, parathyroid glands, ultimobranchial bodies, teeth, skeletal elements of skull and larynx as well as distal limbs. This is Paired box protein Pax-9 (PAX9) from Propithecus coquereli (Coquerel's sifaka).